Here is a 315-residue protein sequence, read N- to C-terminus: Probable cytochrome c oxidase subunit 2 (315 aa).

3 consecutive transmembrane segments (helical) span residues 54–74 (IALI…PLPW), 96–116 (LLYI…FVCI), and 133–153 (VLIE…IAVP). Cu cation contacts are provided by histidine 235, cysteine 270, cysteine 274, and histidine 278.

The protein belongs to the cytochrome c oxidase subunit 2 family. Requires Cu cation as cofactor. Heme serves as cofactor.

Its subcellular location is the cell membrane. The catalysed reaction is 4 Fe(II)-[cytochrome c] + O2 + 8 H(+)(in) = 4 Fe(III)-[cytochrome c] + 2 H2O + 4 H(+)(out). In terms of biological role, subunits I and II form the functional core of the enzyme complex. Electrons originating in cytochrome c are transferred via heme a and Cu(A) to the binuclear center formed by heme a3 and Cu(B). The protein is Probable cytochrome c oxidase subunit 2 (ctaC) of Rickettsia conorii (strain ATCC VR-613 / Malish 7).